A 1024-amino-acid chain; its full sequence is Beta-galactosidase (1024 aa).

Substrate-binding residues include N103 and D202. D202 contributes to the Na(+) binding site. Mg(2+) is bound by residues E417, H419, and E462. Residues E462 and 538–541 (EYAH) each bind substrate. The active-site Proton donor is the E462. Residue E538 is the Nucleophile of the active site. Residue N598 participates in Mg(2+) binding. F602 and N605 together coordinate Na(+). The substrate site is built by N605 and W1000.

Belongs to the glycosyl hydrolase 2 family. As to quaternary structure, homotetramer. The cofactor is Mg(2+). Requires Na(+) as cofactor.

It carries out the reaction Hydrolysis of terminal non-reducing beta-D-galactose residues in beta-D-galactosides.. This Shigella sonnei (strain Ss046) protein is Beta-galactosidase.